A 247-amino-acid polypeptide reads, in one-letter code: TLC domain-containing protein 1 (247 aa).

An N-terminal signal peptide occupies residues 1-35 (MPRLLHPALPLLLGATLTFRALRRALCRLPLPVHV). At 36–46 (RADPLRTWRWH) the chain is on the extracellular side. The 195-residue stretch at 40–234 (LRTWRWHNLL…LLRSDFCPEH (195 aa)) folds into the TLC domain. Residues 47–67 (NLLVSFAHSIVSGIWALLCVW) form a helical membrane-spanning segment. At 68 to 83 (QTPDMLVEIETAWSLS) the chain is on the cytoplasmic side. The helical transmembrane segment at 84–104 (GYLLVCFSAGYFIHDTVDIVA) threads the bilayer. The Extracellular portion of the chain corresponds to 105-123 (SGQTRASWEYLVHHVMAMG). The segment at residues 124-144 (AFFSGIFWSSFVGGGVLTLLV) is an intramembrane region (helical). Residues 145–173 (EVSNIFLTIRMMMKISNAQDHLLYRVNKY) are Extracellular-facing. The helical transmembrane segment at 174–194 (VNLVMYFLFRLAPQAYLTHFF) threads the bilayer. Residues 195-201 (LRYVNQR) lie on the Cytoplasmic side of the membrane. A helical transmembrane segment spans residues 202 to 222 (TLGTFLLGILLMLDVMIIIYF). The Extracellular segment spans residues 223–247 (SRLLRSDFCPEHVPKKQHKDKFLTE).

It localises to the cell membrane. Functionally, regulates the composition and fluidity of the plasma membrane. Inhibits the incorporation of membrane-fluidizing phospholipids containing omega-3 long-chain polyunsaturated fatty acids (LCPUFA) and thereby promotes membrane rigidity. Does not appear to have any effect on LCPUFA synthesis. This is TLC domain-containing protein 1 (TLCD1) from Homo sapiens (Human).